The primary structure comprises 143 residues: Boletus edulis lectin (143 aa).

Beta-D-Gal-(1-&gt;3)-alpha-D-GalNAc contacts are provided by residues Ala-30, 49 to 50 (SG), and 72 to 73 (HN). Residues 49–50 (SG) and 72–73 (HN) each bind N-acetyl-alpha-D-galactosamine. N,N'-diacetylchitobiose contacts are provided by residues 79 to 82 (DVVT), Arg-103, and Tyr-114. Residues 79 to 82 (DVVT), Arg-103, and Tyr-114 contribute to the N-acetyl-alpha-D-glucosamine site.

It belongs to the fungal fruit body lectin family. As to quaternary structure, homotetramer.

Lectin that recognizes O-linked galactose-beta-1,3-N-acetylgalactosamine, a disaccharide (Thomsen-Friedenreich antigen or T-disaccharide), present on cell surface glycoproteins. Can also bind chitin, N,N'-diacetylchitobiose, N-acetylgalactosamine and N-acetylglucosamine. Inhibits proliferation of colon, breast and liver cancer cell lines (in vitro). This chain is Boletus edulis lectin, found in Boletus edulis (King bolete).